Consider the following 78-residue polypeptide: MKLALTFLLILMILPLTTGGKKSDNQALKRLGARKFNENLSELNSACDDAWETCAWSRTCCSRNCCRGICVSRYYECP.

A signal peptide spans 1–19 (MKLALTFLLILMILPLTTG). A propeptide spanning residues 20–33 (GKKSDNQALKRLGA) is cleaved from the precursor. 4 disulfides stabilise this stretch: Cys-47–Cys-61, Cys-54–Cys-66, Cys-60–Cys-70, and Cys-65–Cys-77.

This sequence belongs to the conotoxin I1 superfamily. As to expression, expressed by the venom duct.

It is found in the secreted. This Californiconus californicus (California cone) protein is Conotoxin Cl11.1.